Here is a 498-residue protein sequence, read N- to C-terminus: ATP synthase subunit beta, chloroplastic (498 aa).

G172–T179 lines the ATP pocket.

The protein belongs to the ATPase alpha/beta chains family. F-type ATPases have 2 components, CF(1) - the catalytic core - and CF(0) - the membrane proton channel. CF(1) has five subunits: alpha(3), beta(3), gamma(1), delta(1), epsilon(1). CF(0) has four main subunits: a(1), b(1), b'(1) and c(9-12).

It is found in the plastid. The protein localises to the chloroplast thylakoid membrane. It catalyses the reaction ATP + H2O + 4 H(+)(in) = ADP + phosphate + 5 H(+)(out). Functionally, produces ATP from ADP in the presence of a proton gradient across the membrane. The catalytic sites are hosted primarily by the beta subunits. The chain is ATP synthase subunit beta, chloroplastic from Nicotiana sp. (Tobacco).